A 486-amino-acid chain; its full sequence is Probable cytosol aminopeptidase (486 aa).

It belongs to the peptidase M17 family. The cofactor is Mn(2+).

It is found in the cytoplasm. The enzyme catalyses Release of an N-terminal amino acid, Xaa-|-Yaa-, in which Xaa is preferably Leu, but may be other amino acids including Pro although not Arg or Lys, and Yaa may be Pro. Amino acid amides and methyl esters are also readily hydrolyzed, but rates on arylamides are exceedingly low.. It carries out the reaction Release of an N-terminal amino acid, preferentially leucine, but not glutamic or aspartic acids.. In terms of biological role, presumably involved in the processing and regular turnover of intracellular proteins. Catalyzes the removal of unsubstituted N-terminal amino acids from various peptides. This is Probable cytosol aminopeptidase (pepA) from Synechococcus elongatus (strain ATCC 33912 / PCC 7942 / FACHB-805) (Anacystis nidulans R2).